A 305-amino-acid polypeptide reads, in one-letter code: Mycothiol acetyltransferase (305 aa).

N-acetyltransferase domains are found at residues 10–153 (DRLD…LVVP) and 156–305 (ISLR…YARA). Residue glutamate 38 participates in 1D-myo-inositol 2-(L-cysteinylamino)-2-deoxy-alpha-D-glucopyranoside binding. Acetyl-CoA is bound at residue 82–84 (LAV). 1D-myo-inositol 2-(L-cysteinylamino)-2-deoxy-alpha-D-glucopyranoside-binding residues include glutamate 183, lysine 225, and glutamate 238. Acetyl-CoA is bound by residues 242–244 (VAI) and 249–255 (QGRGLGR). 1D-myo-inositol 2-(L-cysteinylamino)-2-deoxy-alpha-D-glucopyranoside is bound at residue tyrosine 276. 281–286 (NESALH) is a binding site for acetyl-CoA.

It belongs to the acetyltransferase family. MshD subfamily. As to quaternary structure, monomer.

It carries out the reaction 1D-myo-inositol 2-(L-cysteinylamino)-2-deoxy-alpha-D-glucopyranoside + acetyl-CoA = mycothiol + CoA + H(+). Its function is as follows. Catalyzes the transfer of acetyl from acetyl-CoA to desacetylmycothiol (Cys-GlcN-Ins) to form mycothiol. This chain is Mycothiol acetyltransferase, found in Rhodococcus jostii (strain RHA1).